A 229-amino-acid chain; its full sequence is Protein TraJ (229 aa).

The protein localises to the cytoplasm. This protein is essential for positively regulating the expression of transfer genes that are involved in the conjugal transfer of DNA between bacterial cells. The polypeptide is Protein TraJ (traJ) (Escherichia coli (strain K12)).